The primary structure comprises 185 residues: Pyridoxal 5'-phosphate synthase subunit PdxT (185 aa).

Position 46–48 (46–48 (GES)) interacts with L-glutamine. Cys-78 serves as the catalytic Nucleophile. L-glutamine is bound by residues Arg-106 and 132–133 (IR). Active-site charge relay system residues include His-168 and Glu-170.

The protein belongs to the glutaminase PdxT/SNO family. In the presence of PdxS, forms a dodecamer of heterodimers. Only shows activity in the heterodimer.

It carries out the reaction aldehydo-D-ribose 5-phosphate + D-glyceraldehyde 3-phosphate + L-glutamine = pyridoxal 5'-phosphate + L-glutamate + phosphate + 3 H2O + H(+). The catalysed reaction is L-glutamine + H2O = L-glutamate + NH4(+). The protein operates within cofactor biosynthesis; pyridoxal 5'-phosphate biosynthesis. Catalyzes the hydrolysis of glutamine to glutamate and ammonia as part of the biosynthesis of pyridoxal 5'-phosphate. The resulting ammonia molecule is channeled to the active site of PdxS. This is Pyridoxal 5'-phosphate synthase subunit PdxT from Corynebacterium diphtheriae (strain ATCC 700971 / NCTC 13129 / Biotype gravis).